The following is a 278-amino-acid chain: Undecaprenyl-diphosphatase 2 (278 aa).

Transmembrane regions (helical) follow at residues 1–21, 38–58, 85–105, 118–138, 191–211, 223–243, and 251–271; these read MSII…FLPI, FPGF…VILY, FMFA…GLLL, FIAG…RFFV, SFLL…GDLL, PLII…IWLI, and LIYF…YFDH.

This sequence belongs to the UppP family.

It localises to the cell membrane. It carries out the reaction di-trans,octa-cis-undecaprenyl diphosphate + H2O = di-trans,octa-cis-undecaprenyl phosphate + phosphate + H(+). Catalyzes the dephosphorylation of undecaprenyl diphosphate (UPP). Confers resistance to bacitracin. The polypeptide is Undecaprenyl-diphosphatase 2 (Halalkalibacterium halodurans (strain ATCC BAA-125 / DSM 18197 / FERM 7344 / JCM 9153 / C-125) (Bacillus halodurans)).